The primary structure comprises 885 residues: Aconitate hydratase A (885 aa).

[4Fe-4S] cluster is bound by residues C425, C491, and C494.

This sequence belongs to the aconitase/IPM isomerase family. Monomer. [4Fe-4S] cluster is required as a cofactor.

The enzyme catalyses citrate = D-threo-isocitrate. It catalyses the reaction (2S,3R)-3-hydroxybutane-1,2,3-tricarboxylate = 2-methyl-cis-aconitate + H2O. It participates in carbohydrate metabolism; tricarboxylic acid cycle; isocitrate from oxaloacetate: step 2/2. The protein operates within organic acid metabolism; propanoate degradation. Its function is as follows. Involved in the catabolism of short chain fatty acids (SCFA) via the tricarboxylic acid (TCA)(acetyl degradation route) and probably the 2-methylcitrate cycle I (propionate degradation route). Catalyzes the reversible isomerization of citrate to isocitrate via cis-aconitate. Could catalyze the hydration of 2-methyl-cis-aconitate to yield (2R,3S)-2-methylisocitrate. The apo form of AcnA functions as a RNA-binding regulatory protein. The polypeptide is Aconitate hydratase A (acnA) (Rickettsia bellii (strain RML369-C)).